We begin with the raw amino-acid sequence, 95 residues long: Aspartyl/glutamyl-tRNA(Asn/Gln) amidotransferase subunit C (95 aa).

It belongs to the GatC family. Heterotrimer of A, B and C subunits.

The catalysed reaction is L-glutamyl-tRNA(Gln) + L-glutamine + ATP + H2O = L-glutaminyl-tRNA(Gln) + L-glutamate + ADP + phosphate + H(+). The enzyme catalyses L-aspartyl-tRNA(Asn) + L-glutamine + ATP + H2O = L-asparaginyl-tRNA(Asn) + L-glutamate + ADP + phosphate + 2 H(+). Its function is as follows. Allows the formation of correctly charged Asn-tRNA(Asn) or Gln-tRNA(Gln) through the transamidation of misacylated Asp-tRNA(Asn) or Glu-tRNA(Gln) in organisms which lack either or both of asparaginyl-tRNA or glutaminyl-tRNA synthetases. The reaction takes place in the presence of glutamine and ATP through an activated phospho-Asp-tRNA(Asn) or phospho-Glu-tRNA(Gln). The chain is Aspartyl/glutamyl-tRNA(Asn/Gln) amidotransferase subunit C from Methylococcus capsulatus (strain ATCC 33009 / NCIMB 11132 / Bath).